The following is a 251-amino-acid chain: 5'-nucleotidase SurE (251 aa).

The a divalent metal cation site is built by Asp-8, Asp-9, Ser-39, and Asn-95.

This sequence belongs to the SurE nucleotidase family. A divalent metal cation serves as cofactor.

It localises to the cytoplasm. The enzyme catalyses a ribonucleoside 5'-phosphate + H2O = a ribonucleoside + phosphate. Nucleotidase that shows phosphatase activity on nucleoside 5'-monophosphates. This chain is 5'-nucleotidase SurE, found in Clostridium botulinum (strain Eklund 17B / Type B).